Here is a 428-residue protein sequence, read N- to C-terminus: Trigger factor (428 aa).

Positions 165–240 constitute a PPIase FKBP-type domain; it reads ADLIKLDAEG…VKEVKRMELP (76 aa).

This sequence belongs to the FKBP-type PPIase family. Tig subfamily.

The protein localises to the cytoplasm. It catalyses the reaction [protein]-peptidylproline (omega=180) = [protein]-peptidylproline (omega=0). Its function is as follows. Involved in protein export. Acts as a chaperone by maintaining the newly synthesized protein in an open conformation. Functions as a peptidyl-prolyl cis-trans isomerase. The polypeptide is Trigger factor (Prosthecochloris aestuarii (strain DSM 271 / SK 413)).